A 343-amino-acid chain; its full sequence is Low conductance mechanosensitive channel YnaI (343 aa).

Residues 1–9 lie on the Periplasmic side of the membrane; that stretch reads MIAELFTNN. Residues 10 to 30 traverse the membrane as a helical segment; sequence ALNLVIIFGSCAALILMSFWF. Residues 31–40 are Cytoplasmic-facing; it reads RRGNRKRKGF. The helical transmembrane segment at 41–61 threads the bilayer; the sequence is LFHAVQFLIYTIIISAVGSII. The Periplasmic segment spans residues 62 to 77; sequence NYVIENYKLKFITPGV. The helical transmembrane segment at 78–98 threads the bilayer; it reads IDFICTSLIAVILTIKLFLLI. Residues 99–125 lie on the Cytoplasmic side of the membrane; sequence NQFEKQQIKKGRDITSARIMSRIIKIT. A helical membrane pass occupies residues 126-146; that stretch reads IIVVLVLLYGEHFGMSLSGLL. Thr-147 is a topological domain (periplasmic). Residues 148 to 168 form a helical membrane-spanning segment; it reads FGGIGGLAVGMAGKDILSNFF. At 169–343 the chain is on the cytoplasmic side; sequence SGIMLYFDRP…DNITPPEQGR (175 aa).

The protein belongs to the MscS (TC 1.A.23) family. In terms of assembly, homoheptamer.

The protein resides in the cell inner membrane. Its function is as follows. Mechanosensitive channel that protects cells against hypoosmotic stress when highly overexpressed. The protein is Low conductance mechanosensitive channel YnaI (ynaI) of Escherichia coli (strain K12).